A 276-amino-acid polypeptide reads, in one-letter code: 3-methyl-2-oxobutanoate hydroxymethyltransferase (276 aa).

Mg(2+)-binding residues include Asp50 and Asp89. 3-methyl-2-oxobutanoate is bound by residues 50–51 (DS), Asp89, and Lys119. Residue Glu121 participates in Mg(2+) binding. The active-site Proton acceptor is Glu188.

This sequence belongs to the PanB family. Homodecamer; pentamer of dimers. Mg(2+) is required as a cofactor.

It is found in the cytoplasm. It carries out the reaction 3-methyl-2-oxobutanoate + (6R)-5,10-methylene-5,6,7,8-tetrahydrofolate + H2O = 2-dehydropantoate + (6S)-5,6,7,8-tetrahydrofolate. Its pathway is cofactor biosynthesis; (R)-pantothenate biosynthesis; (R)-pantoate from 3-methyl-2-oxobutanoate: step 1/2. Functionally, catalyzes the reversible reaction in which hydroxymethyl group from 5,10-methylenetetrahydrofolate is transferred onto alpha-ketoisovalerate to form ketopantoate. The sequence is that of 3-methyl-2-oxobutanoate hydroxymethyltransferase from Paracoccus denitrificans (strain Pd 1222).